The primary structure comprises 27 residues: RDWERREFERRQNELRREQEQRREELL.

Functionally, has weak antifungal activity toward C.comatus and P.piricola but not toward M.arachidicola. Inhibits cell-free translation in rabbit reticulocyte lysate system. The polypeptide is Alpha-benincasin (Benincasa hispida (Wax gourd)).